Consider the following 196-residue polypeptide: Pantothenic acid transporter PanT (196 aa).

6 consecutive transmembrane segments (helical) span residues 10 to 30 (AILA…QFVI), 35 to 55 (FPVK…ILGW), 58 to 78 (GAFL…IVTT), 99 to 119 (WGLF…YFVY), 131 to 151 (AAFA…FLFF), and 161 to 181 (YLLG…AVIL).

In E.coli forms a stable energy-coupling factor (ECF) transporter complex composed of 2 membrane-embedded substrate-binding protein (S component), 2 ATP-binding proteins (A and A' components) and 2 transmembrane proteins (T component), probably with a stoichiometry of 2:1:1:2. May be able to interact with more than 1 S component at a time.

The protein localises to the cell membrane. In terms of biological role, probably a pantothenic acid-binding protein that interacts with the energy-coupling factor (ECF) ABC-transporter complex. Unlike classic ABC transporters this ECF transporter provides the energy necessary to transport a number of different substrates. The substrates themselves are bound by transmembrane, not extracytoplasmic soluble proteins. This chain is Pantothenic acid transporter PanT (panT), found in Lactococcus lactis subsp. cremoris (strain MG1363).